A 281-amino-acid polypeptide reads, in one-letter code: 2-dehydro-3-deoxyphosphooctonate aldolase (281 aa).

Belongs to the KdsA family.

The protein localises to the cytoplasm. The catalysed reaction is D-arabinose 5-phosphate + phosphoenolpyruvate + H2O = 3-deoxy-alpha-D-manno-2-octulosonate-8-phosphate + phosphate. Its pathway is carbohydrate biosynthesis; 3-deoxy-D-manno-octulosonate biosynthesis; 3-deoxy-D-manno-octulosonate from D-ribulose 5-phosphate: step 2/3. It participates in bacterial outer membrane biogenesis; lipopolysaccharide biosynthesis. This Marinobacter nauticus (strain ATCC 700491 / DSM 11845 / VT8) (Marinobacter aquaeolei) protein is 2-dehydro-3-deoxyphosphooctonate aldolase.